The sequence spans 510 residues: ATP synthase subunit alpha (510 aa).

169–176 (GDRQTGKT) contacts ATP.

The protein belongs to the ATPase alpha/beta chains family. F-type ATPases have 2 components, CF(1) - the catalytic core - and CF(0) - the membrane proton channel. CF(1) has five subunits: alpha(3), beta(3), gamma(1), delta(1), epsilon(1). CF(0) has three main subunits: a(1), b(2) and c(9-12). The alpha and beta chains form an alternating ring which encloses part of the gamma chain. CF(1) is attached to CF(0) by a central stalk formed by the gamma and epsilon chains, while a peripheral stalk is formed by the delta and b chains.

The protein localises to the cell inner membrane. The catalysed reaction is ATP + H2O + 4 H(+)(in) = ADP + phosphate + 5 H(+)(out). Functionally, produces ATP from ADP in the presence of a proton gradient across the membrane. The alpha chain is a regulatory subunit. The chain is ATP synthase subunit alpha from Nitrobacter winogradskyi (strain ATCC 25391 / DSM 10237 / CIP 104748 / NCIMB 11846 / Nb-255).